The primary structure comprises 103 residues: MSQYDNVSVVKKANVYFDGKCVSHTVVLADGTKKTVGVILPSSLTFNTGAPEIMEGVGGSCRVKLKGESEWKTYGDGQSFNVPGNSSFEIACDEPYHYVCHFG.

It belongs to the nucleoside phosphorylase PpnP family.

The catalysed reaction is a purine D-ribonucleoside + phosphate = a purine nucleobase + alpha-D-ribose 1-phosphate. It carries out the reaction adenosine + phosphate = alpha-D-ribose 1-phosphate + adenine. The enzyme catalyses cytidine + phosphate = cytosine + alpha-D-ribose 1-phosphate. It catalyses the reaction guanosine + phosphate = alpha-D-ribose 1-phosphate + guanine. The catalysed reaction is inosine + phosphate = alpha-D-ribose 1-phosphate + hypoxanthine. It carries out the reaction thymidine + phosphate = 2-deoxy-alpha-D-ribose 1-phosphate + thymine. The enzyme catalyses uridine + phosphate = alpha-D-ribose 1-phosphate + uracil. It catalyses the reaction xanthosine + phosphate = alpha-D-ribose 1-phosphate + xanthine. Catalyzes the phosphorolysis of diverse nucleosides, yielding D-ribose 1-phosphate and the respective free bases. Can use uridine, adenosine, guanosine, cytidine, thymidine, inosine and xanthosine as substrates. Also catalyzes the reverse reactions. This chain is Pyrimidine/purine nucleoside phosphorylase, found in Dechloromonas aromatica (strain RCB).